The chain runs to 246 residues: Probable transcriptional regulatory protein GK2594 (246 aa).

It belongs to the TACO1 family.

It is found in the cytoplasm. The polypeptide is Probable transcriptional regulatory protein GK2594 (Geobacillus kaustophilus (strain HTA426)).